Reading from the N-terminus, the 377-residue chain is MKRDYYEVLGVSKSADEQEIKKAYRKLARQYHPDVNPGDKDAEEKFKEATEAYDVLSDTEKRARYDQMGHSAFDPNQQGFGGFGGDFGGFGDIFDMFFGGGGGGGQRRQGPTRGNDLRYDLTITFEEAAFGTEKEIQVPRQETCTECHGSGSAPGTHPTTCSQCHGTGQVKATQRTPFGAIQTARTCPACNGSGQFISSPCKECSGKGTTRKVKTIKVTVPPGSEDGLNLRFSGNGEAGLRGGPSGDLYVVLNVKAHKFFEREGNDVYCEIPITFVQAALGSELDVPTLDGKVKMKIPEGTQTATVFRLRGHGIPYRRGNGRGDQHVRVVVATPTKLTDRQKELLREFGEVTSDQQQMGKKSFFEKVKENIRDAIDL.

A J domain is found at 4 to 69 (DYYEVLGVSK…EKRARYDQMG (66 aa)). The CR-type zinc-finger motif lies at 131 to 213 (GTEKEIQVPR…CSGKGTTRKV (83 aa)). 8 residues coordinate Zn(2+): Cys144, Cys147, Cys161, Cys164, Cys187, Cys190, Cys201, and Cys204. 4 CXXCXGXG motif repeats span residues 144 to 151 (CTECHGSG), 161 to 168 (CSQCHGTG), 187 to 194 (CPACNGSG), and 201 to 208 (CKECSGKG).

The protein belongs to the DnaJ family. In terms of assembly, homodimer. The cofactor is Zn(2+).

The protein resides in the cytoplasm. Participates actively in the response to hyperosmotic and heat shock by preventing the aggregation of stress-denatured proteins and by disaggregating proteins, also in an autonomous, DnaK-independent fashion. Unfolded proteins bind initially to DnaJ; upon interaction with the DnaJ-bound protein, DnaK hydrolyzes its bound ATP, resulting in the formation of a stable complex. GrpE releases ADP from DnaK; ATP binding to DnaK triggers the release of the substrate protein, thus completing the reaction cycle. Several rounds of ATP-dependent interactions between DnaJ, DnaK and GrpE are required for fully efficient folding. Also involved, together with DnaK and GrpE, in the DNA replication of plasmids through activation of initiation proteins. This is Chaperone protein DnaJ from Desulfitobacterium hafniense (strain DSM 10664 / DCB-2).